The primary structure comprises 754 residues: Phosphoribosylformylglycinamidine synthase subunit PurL (754 aa).

The disordered stretch occupies residues 1-21; it reads MLDTVEHAATTPDQPQPYGEL. Residue His-54 is part of the active site. 2 residues coordinate ATP: Tyr-57 and Lys-101. Residue Glu-103 coordinates Mg(2+). Residues 104–107 and Arg-126 contribute to the substrate site; that span reads SHNH. The active-site Proton acceptor is the His-105. Asp-127 lines the Mg(2+) pocket. Gln-252 lines the substrate pocket. Residue Asp-280 coordinates Mg(2+). 324-326 lines the substrate pocket; it reads ESQ. 2 residues coordinate ATP: Asn-512 and Gly-549. Mg(2+) is bound at residue Asn-550. Ser-552 is a binding site for substrate.

The protein belongs to the FGAMS family. In terms of assembly, monomer. Part of the FGAM synthase complex composed of 1 PurL, 1 PurQ and 2 PurS subunits.

It localises to the cytoplasm. It carries out the reaction N(2)-formyl-N(1)-(5-phospho-beta-D-ribosyl)glycinamide + L-glutamine + ATP + H2O = 2-formamido-N(1)-(5-O-phospho-beta-D-ribosyl)acetamidine + L-glutamate + ADP + phosphate + H(+). It functions in the pathway purine metabolism; IMP biosynthesis via de novo pathway; 5-amino-1-(5-phospho-D-ribosyl)imidazole from N(2)-formyl-N(1)-(5-phospho-D-ribosyl)glycinamide: step 1/2. Its function is as follows. Part of the phosphoribosylformylglycinamidine synthase complex involved in the purines biosynthetic pathway. Catalyzes the ATP-dependent conversion of formylglycinamide ribonucleotide (FGAR) and glutamine to yield formylglycinamidine ribonucleotide (FGAM) and glutamate. The FGAM synthase complex is composed of three subunits. PurQ produces an ammonia molecule by converting glutamine to glutamate. PurL transfers the ammonia molecule to FGAR to form FGAM in an ATP-dependent manner. PurS interacts with PurQ and PurL and is thought to assist in the transfer of the ammonia molecule from PurQ to PurL. The chain is Phosphoribosylformylglycinamidine synthase subunit PurL from Mycobacterium bovis (strain ATCC BAA-935 / AF2122/97).